A 174-amino-acid chain; its full sequence is Gamma-crystallin A (174 aa).

Beta/gamma crystallin 'Greek key' domains are found at residues 2–40 (GKITFYEDRGFQGRCYECSSDCPNLQTYFSRCNSIRVDS) and 41–83 (GCWM…RSIP). The connecting peptide stretch occupies residues 84-87 (YTSS). Beta/gamma crystallin 'Greek key' domains are found at residues 88-128 (HRIR…HVLE) and 129-171 (GCWV…RRVM).

It belongs to the beta/gamma-crystallin family.

Crystallins are the dominant structural components of the vertebrate eye lens. The polypeptide is Gamma-crystallin A (Cryga) (Mus musculus (Mouse)).